Reading from the N-terminus, the 216-residue chain is Large ribosomal subunit protein uL3 (216 aa).

Residues 136–155 (GVSISHRSHGSTGQRQDPGK) form a disordered region. Residue Gln-151 is modified to N5-methylglutamine.

The protein belongs to the universal ribosomal protein uL3 family. Part of the 50S ribosomal subunit. Forms a cluster with proteins L14 and L19. Methylated by PrmB.

In terms of biological role, one of the primary rRNA binding proteins, it binds directly near the 3'-end of the 23S rRNA, where it nucleates assembly of the 50S subunit. The chain is Large ribosomal subunit protein uL3 from Rickettsia prowazekii (strain Madrid E).